Here is a 145-residue protein sequence, read N- to C-terminus: Antiholin-like protein LrgA (145 aa).

Transmembrane regions (helical) follow at residues 10–30 (PAHF…SKII), 33–53 (FMPI…VLLC), 72–92 (NIGL…GVIS), and 96–116 (FLII…TGYV).

It belongs to the CidA/LrgA family. LrgA subfamily.

Its subcellular location is the cell membrane. Functionally, inhibits the expression or activity of extracellular murein hydrolases by interacting, possibly with LrgB, with the holin-like proteins CidA and/or CidB. The LrgAB and CidAB proteins may affect the proton motive force of the membrane. May be involved in programmed cell death (PCD), possibly triggering PCD in response to antibiotics and environmental stresses. The chain is Antiholin-like protein LrgA from Staphylococcus aureus (strain JH1).